Consider the following 576-residue polypeptide: Vesicular glutamate transporter 1 (576 aa).

Residues 1–63 (MEFRKEEFKK…CTCFGLPRRY (63 aa)) are Cytoplasmic-facing. The helical transmembrane segment at 64 to 84 (IIAIMSGLGFCISFGIRCNLG) threads the bilayer. At 85-116 (VAIVSMVNNNTVYKGNKIVIEQAQFTWDPETV) the chain is on the vesicular side. An N-linked (GlcNAc...) asparagine glycan is attached at Asn-93. The helical transmembrane segment at 117–137 (GMIHGSFFWGYIVTQIPGGYI) threads the bilayer. Topologically, residues 138–140 (CQK) are cytoplasmic. Residues 141 to 161 (FAANRVFGFAIVATSTLNMLI) form a helical membrane-spanning segment. Over 162 to 168 (PSAARVH) the chain is Vesicular. Residues 169 to 189 (FACVICVRILQGLVEGVTYPA) traverse the membrane as a helical segment. Topologically, residues 190–208 (CHGIWSKWAPPLERSRLAT) are cytoplasmic. Residues 209 to 229 (TAFCGSYAGAVVAMPLAGVLV) form a helical membrane-spanning segment. Residues 230 to 236 (QYSGWSS) are Vesicular-facing. The helical transmembrane segment at 237 to 257 (VFYVYGSFGIMWYMFWILVSY) threads the bilayer. Topologically, residues 258-302 (ESPAIHPTISEEEKKYIEESIGESTGLMNPMAKFKAPWRKFFTSM) are cytoplasmic. The chain crosses the membrane as a helical span at residues 303-323 (PVYAIIVANFCRSWTFYLLLI). Residues 324 to 341 (SQPAYFEEVFGFEISKVG) lie on the Vesicular side of the membrane. The helical transmembrane segment at 342-362 (LLSALPHLVMTIIVPIGGQIA) threads the bilayer. The Cytoplasmic segment spans residues 363 to 378 (DFLRTKRIMSTTNVRK). Residues 379–399 (MMNCGGFGMEATLLLVVGYSH) form a helical membrane-spanning segment. Over 400–401 (SR) the chain is Vesicular. Residues 402 to 422 (GVAISFLVLAVGFSGFAISGF) traverse the membrane as a helical segment. At 423–435 (NVNHLDIAPRYAS) the chain is on the cytoplasmic side. The chain crosses the membrane as a helical span at residues 436 to 456 (ILMGISNGVGTLSGMVCPLIV). Topologically, residues 457–469 (GAMTKHKTREEWQ) are vesicular. Residues 470–490 (YVFLIASLVHYGGVLFYGIFA) traverse the membrane as a helical segment. Topologically, residues 491-576 (SGEKQPWAEP…YGTVAERDLS (86 aa)) are cytoplasmic. Positions 517–547 (ADESEEQSQAYGAYGSYGATQTTSQQNGGWT) are disordered. A compositionally biased stretch (polar residues) spans 534–545 (GATQTTSQQNGG).

It belongs to the major facilitator superfamily. Sodium/anion cotransporter family. VGLUT subfamily.

The protein localises to the cytoplasmic vesicle. Its subcellular location is the secretory vesicle. It is found in the synaptic vesicle membrane. It localises to the cell membrane. The protein resides in the synapse. The protein localises to the synaptosome. It carries out the reaction L-glutamate(out) = L-glutamate(in). The catalysed reaction is chloride(in) = chloride(out). The enzyme catalyses 3 Na(+)(out) + phosphate(out) = 3 Na(+)(in) + phosphate(in). It catalyses the reaction phosphate(in) = phosphate(out). It carries out the reaction K(+)(in) + H(+)(out) = K(+)(out) + H(+)(in). Chloride channel activity is allosterically activated by lumenal H(+) and Cl(-) leading to synaptic vesicles acidification. The L-glutamate transport activity is allosterically activated by lumenal H(+) and Cl(-). The allosteric activation by H(+) efficiently prevents non-vesicular efflux across the plasma membrane, thereby restricting L-glutamate transport activity to acidic membranes such as synaptic vesicles. In terms of biological role, multifunctional transporter that transports L-glutamate as well as multiple ions such as chloride, proton, potassium, sodium and phosphate. At the synaptic vesicle membrane, mainly functions as an uniporter which transports preferentially L-glutamate but also phosphate from the cytoplasm into synaptic vesicles at presynaptic nerve terminals of excitatory neural cells. The L-glutamate or phosphate uniporter activity is electrogenic and is driven by the proton electrochemical gradient, mainly by the electrical gradient established by the vacuolar H(+)-ATPase across the synaptic vesicle membrane. In addition, functions as a chloride channel that allows a chloride permeation through the synaptic vesicle membrane that affects the proton electrochemical gradient and promotes synaptic vesicles acidification. Moreover, may function as a K(+)/H(+) antiport allowing to maintain the electrical gradient and to decrease chemical gradient and therefore sustain vesicular glutamate uptake. The vesicular K(+)/H(+) antiport activity is electroneutral. At the plasma membrane, following exocytosis, functions as a symporter of Na(+) and phosphate from the extracellular space to the cytoplasm allowing synaptic phosphate homeostasis regulation. The symporter activity is driven by an inside negative membrane potential and is electrogenic. Is necessary for synaptic signaling of visual-evoked responses from photoreceptors. This Xenopus tropicalis (Western clawed frog) protein is Vesicular glutamate transporter 1.